A 348-amino-acid chain; its full sequence is Protein RecA (348 aa).

65–72 lines the ATP pocket; the sequence is GPESSGKT.

The protein belongs to the RecA family.

It localises to the cytoplasm. In terms of biological role, can catalyze the hydrolysis of ATP in the presence of single-stranded DNA, the ATP-dependent uptake of single-stranded DNA by duplex DNA, and the ATP-dependent hybridization of homologous single-stranded DNAs. It interacts with LexA causing its activation and leading to its autocatalytic cleavage. In Enterococcus gallinarum, this protein is Protein RecA.